The following is a 1647-amino-acid chain: Probable ubiquitin fusion degradation protein C12B10.01c (1647 aa).

Over residues 192 to 209 (TYSDSSNYHTSTDSSQYN) the composition is skewed to polar residues. Disordered stretches follow at residues 192 to 288 (TYSD…PSAA) and 1039 to 1076 (ESMSGSSRNSSGDYTDSMSQDAPNHTTEPSERRDSSTS). 2 stretches are compositionally biased toward acidic residues: residues 218–228 (DTNDGTDDDIN) and 245–273 (ERDEDVDEEEEEDDDENNDEGDDEDENEN). A compositionally biased stretch (low complexity) spans 1039–1050 (ESMSGSSRNSSG). Residues 1051–1065 (DYTDSMSQDAPNHTT) show a composition bias toward polar residues. Residues 1066–1076 (EPSERRDSSTS) are compositionally biased toward basic and acidic residues. Positions 1183-1257 (IENILTDFSN…SVSFLLSRNP (75 aa)) are K-box. One can recognise an HECT domain in the interval 1294–1647 (ATYAASENIL…LEGQGSFHLS (354 aa)). Catalysis depends on Cys1614, which acts as the Glycyl thioester intermediate.

The protein belongs to the UPL family. K-HECT subfamily.

The enzyme catalyses S-ubiquitinyl-[E2 ubiquitin-conjugating enzyme]-L-cysteine + [acceptor protein]-L-lysine = [E2 ubiquitin-conjugating enzyme]-L-cysteine + N(6)-ubiquitinyl-[acceptor protein]-L-lysine.. E3 ubiquitin-protein ligase which accepts ubiquitin from an E2 ubiquitin-conjugating enzyme in the form of a thioester and then directly transfers the ubiquitin to targeted substrates. In Schizosaccharomyces pombe (strain 972 / ATCC 24843) (Fission yeast), this protein is Probable ubiquitin fusion degradation protein C12B10.01c.